The chain runs to 411 residues: MLDLKNLQNNFDEVAKKLKNKKVDENILKKLAELFASLKKEKTALEEFQAFQNKFSKELATAEDKESLKAKLSENKSKINEQSVKVNALENELEEIAHAIPNIPDECVPVGEDEDENVELKKVLNPPSFDFTPKEHFELGESLNWLDFVRGVKISQSRFCVLKNEGALLSRALVNYMIDFNRSHGFEFVNVPFLVNGATMFGTGQLPKFKEDMYKVDDEDLYLISTSEIPVTNLYSGEILASETLPIKMTCYSACFRKEAGSAGRDTRGIIRQHQFEKVELVSITKPEQSDSVFNEMLECASDLLSSLGLAHRHLMLCTGDLGFSAAKTVDLEVWLPGQNKYREISSVSNCRDFQARRAKIRYKNEQGKNELVHTLNGSSLAVGRTLVAIMENYQDKEGKIHIPDALKKYF.

Position 226–228 (226–228 (TSE)) interacts with L-serine. Position 257-259 (257-259 (RKE)) interacts with ATP. Glutamate 280 is a binding site for L-serine. 344 to 347 (EISS) contacts ATP. Residue serine 379 participates in L-serine binding.

The protein belongs to the class-II aminoacyl-tRNA synthetase family. Type-1 seryl-tRNA synthetase subfamily. In terms of assembly, homodimer. The tRNA molecule binds across the dimer.

Its subcellular location is the cytoplasm. It carries out the reaction tRNA(Ser) + L-serine + ATP = L-seryl-tRNA(Ser) + AMP + diphosphate + H(+). The catalysed reaction is tRNA(Sec) + L-serine + ATP = L-seryl-tRNA(Sec) + AMP + diphosphate + H(+). It participates in aminoacyl-tRNA biosynthesis; selenocysteinyl-tRNA(Sec) biosynthesis; L-seryl-tRNA(Sec) from L-serine and tRNA(Sec): step 1/1. Its function is as follows. Catalyzes the attachment of serine to tRNA(Ser). Is also able to aminoacylate tRNA(Sec) with serine, to form the misacylated tRNA L-seryl-tRNA(Sec), which will be further converted into selenocysteinyl-tRNA(Sec). The polypeptide is Serine--tRNA ligase (Campylobacter jejuni subsp. jejuni serotype O:6 (strain 81116 / NCTC 11828)).